A 303-amino-acid chain; its full sequence is Glucose-1-phosphate thymidylyltransferase (303 aa).

Residues Asp-108 and Asp-222 each coordinate Mg(2+).

Belongs to the glucose-1-phosphate thymidylyltransferase family. Mg(2+) is required as a cofactor.

It catalyses the reaction dTTP + alpha-D-glucose 1-phosphate + H(+) = dTDP-alpha-D-glucose + diphosphate. Functionally, catalyzes the formation of dTDP-glucose, from dTTP and glucose 1-phosphate, as well as its pyrophosphorolysis. Its function is as follows. Probably involved in the biosynthesis of the acarviose moiety of the alpha-glucosidase inhibitor acarbose. This is Glucose-1-phosphate thymidylyltransferase (acbA) from Actinoplanes sp. (strain ATCC 31044 / CBS 674.73 / SE50/110).